We begin with the raw amino-acid sequence, 358 residues long: Phospho-N-acetylmuramoyl-pentapeptide-transferase (358 aa).

10 consecutive transmembrane segments (helical) span residues 19-39 (YLTL…VLIG), 71-91 (TMGG…WADL), 95-115 (YVWV…IDDY), 126-146 (LIAR…ALYL), 166-186 (VMPQ…VGTS), 194-214 (GLDG…AIFA), 237-257 (LVIV…FNTY), 261-281 (VFMG…IAVL), 286-306 (IVLV…ILQV), and 336-356 (VIVR…ATLK).

The protein belongs to the glycosyltransferase 4 family. MraY subfamily. Mg(2+) serves as cofactor.

The protein localises to the cell inner membrane. It carries out the reaction UDP-N-acetyl-alpha-D-muramoyl-L-alanyl-gamma-D-glutamyl-meso-2,6-diaminopimeloyl-D-alanyl-D-alanine + di-trans,octa-cis-undecaprenyl phosphate = di-trans,octa-cis-undecaprenyl diphospho-N-acetyl-alpha-D-muramoyl-L-alanyl-D-glutamyl-meso-2,6-diaminopimeloyl-D-alanyl-D-alanine + UMP. It participates in cell wall biogenesis; peptidoglycan biosynthesis. Its function is as follows. Catalyzes the initial step of the lipid cycle reactions in the biosynthesis of the cell wall peptidoglycan: transfers peptidoglycan precursor phospho-MurNAc-pentapeptide from UDP-MurNAc-pentapeptide onto the lipid carrier undecaprenyl phosphate, yielding undecaprenyl-pyrophosphoryl-MurNAc-pentapeptide, known as lipid I. The protein is Phospho-N-acetylmuramoyl-pentapeptide-transferase of Pseudoalteromonas atlantica (strain T6c / ATCC BAA-1087).